A 307-amino-acid chain; its full sequence is Metapyrocatechase (307 aa).

2 VOC domains span residues 7–122 (RPGH…LYAD) and 150–269 (RFDH…VFCG). Residues H153, H214, and E265 each contribute to the Fe cation site.

This sequence belongs to the extradiol ring-cleavage dioxygenase family. As to quaternary structure, homotetramer. Fe(2+) is required as a cofactor.

The catalysed reaction is catechol + O2 = (2Z,4E)-2-hydroxy-6-oxohexa-2,4-dienoate + H(+). It participates in xenobiotic degradation; toluene degradation. The chain is Metapyrocatechase (bztE) from Pseudomonas aeruginosa.